The primary structure comprises 818 residues: H(+)/Cl(-) exchange transporter 3 (818 aa).

Topologically, residues 1–125 (MESEQLFHRG…WEMTKSLYDA (125 aa)) are cytoplasmic. 3 consecutive short sequence motifs (di-leucine internalization motif; mediates targeting to late endosome and lysosome membranes) follow at residues 28–29 (LL), 46–47 (LL), and 71–75 (LLDLL). A helical membrane pass occupies residues 126–163 (WSGWLVVTLTGLASGALAGLIDIAADWMTDLKEGICLS). Asn-177 carries N-linked (GlcNAc...) asparagine glycosylation. The chain crosses the membrane as a helical span at residues 209–232 (MNYIMYIFWALSFAFLAVSLVKVF). Residues 238–242 (GSGIP) carry the Selectivity filter part_1 motif. Ser-239 is a chloride binding site. The segment at residues 241-248 (IPEIKTIL) is an intramembrane region (helical). The next 2 helical transmembrane spans lie at 258-276 (GKWT…VASG) and 282-301 (EGPL…YLFP). The Selectivity filter part_2 signature appears at 280-284 (GKEGP). Intramembrane regions (helical) lie at residues 313 to 325 (VLSA…VSVA) and 329 to 337 (PIGGVLFSL). 3 helical membrane-spanning segments follow: residues 349–367 (LWRS…RSIN), 391–416 (FPFI…AWCR), and 423–443 (FGKY…VIAF). Residues Asn-451 and Asn-479 are each glycosylated (N-linked (GlcNAc...) asparagine). 2 consecutive transmembrane segments (helical) span residues 500–520 (IWQL…TFGI) and 525–544 (GLFI…VGIA). A Selectivity filter part_3 motif is present at residues 525 to 529 (GLFIP). Chloride is bound at residue Phe-527. 2 intramembrane regions (helical) span residues 572–586 (GLYA…LGGV) and 590–601 (TVSLVVIVFELT). Residues 602–605 (GGLE) constitute an intramembrane region (note=Loop between two helices). A helical transmembrane segment spans residues 606–624 (YIVPLMAAVMTSKWVGDAF). At 625-818 (GREGIYEAHI…NQDPASIMFN (194 aa)) the chain is on the cytoplasmic side. Tyr-630 contacts chloride. CBS domains lie at 658–722 (MRPR…ARKK) and 755–812 (LDMS…NQDP). ATP contacts are provided by residues 689-691 (YNG) and 796-799 (TKKD).

Belongs to the chloride channel (TC 2.A.49) family. ClC-3/CLCN3 subfamily. In terms of assembly, monomer and homodimer. Forms heterodimers with CLCN4. As to quaternary structure, interacts with GOPC, PDZK1 and NHERF1/EBP50. N-glycosylated. In terms of tissue distribution, expressed primarily in tissues derived from neuroectoderm. Within the brain, its expression is particularly evident in the hippocampus, olfactory cortex, and olfactory bulb. Highly expressed in aortic and coronary vascular smooth muscle cells, and aortic endothelial cells. Also expressed in tracheal and alveolar epithelial cells, and intima and media of the pulmonary vessels. Expressed in bronchus and colon (at protein level).

It localises to the early endosome membrane. The protein resides in the late endosome membrane. It is found in the lysosome membrane. The protein localises to the cell membrane. Its subcellular location is the golgi apparatus membrane. It localises to the cell projection. The protein resides in the ruffle membrane. Its function is as follows. Strongly outwardly rectifying, electrogenic H(+)/Cl(-)exchanger which mediates the exchange of chloride ions against protons. The CLC channel family contains both chloride channels and proton-coupled anion transporters that exchange chloride or another anion for protons. The presence of conserved gating glutamate residues is typical for family members that function as antiporters. In terms of biological role, strongly outwardly rectifying, electrogenic H(+)/Cl(-)exchanger which mediates the exchange of chloride ions against protons. The sequence is that of H(+)/Cl(-) exchange transporter 3 (CLCN3) from Homo sapiens (Human).